The following is a 1850-amino-acid chain: Serine/threonine-protein kinase WNK (1850 aa).

Disordered stretches follow at residues 1–108, 221–253, and 272–309; these read MPDS…NALE, QHSI…NNDK, and MVND…EKAA. 2 stretches are compositionally biased toward low complexity: residues 16–26 and 234–251; these read SSVSSTTASTT and PPNT…AANN. The segment covering 284–309 has biased composition (basic and acidic residues); sequence DMDKMVSEEERARKEQEKREEEEKAA. The region spanning 334-596 is the Protein kinase domain; the sequence is LKFDEELGRG…VKQLLVDDFF (263 aa). ATP contacts are provided by residues Ser-344, 416 to 419, and Lys-466; that span reads TELM. Asp-483 serves as the catalytic Proton acceptor. The stretch at 693 to 749 forms a coiled coil; that stretch reads DHRLLEIKRAKEEEERIREEAEIKEELRLRAEAKEKEKERLEKERLEKKAAAAAAAN. Basic and acidic residues predominate over residues 727–742; that stretch reads EKEKERLEKERLEKKA. Disordered stretches follow at residues 727-790, 890-943, 1040-1130, 1188-1249, 1588-1636, 1721-1740, and 1769-1850; these read EKEK…AQQP, TPAS…KRKS, EPPT…AAKP, SPVS…TPAI, GTHI…PSHS, ASLS…DNEG, and IIPS…IENV. Residues 751-760 show a composition bias toward pro residues; it reads NPTPIPPTPA. Residues 776-790 show a composition bias toward polar residues; sequence STQTSAEIQQSAQQP. Residues 890–934 are compositionally biased toward low complexity; sequence TPASIASPSPAPSATDVASTTAPVTPAPTPTTTTDGGAAAASTTT. Basic and acidic residues predominate over residues 1062-1071; that stretch reads PKIEIEKTPP. Positions 1077-1101 are enriched in polar residues; it reads QEPNNVQVTNVRKVSQESNAESVQS. Low complexity predominate over residues 1188 to 1207; the sequence is SPVSHSLSSNSSPSATTHSN. The segment covering 1208 to 1217 has biased composition (polar residues); the sequence is MSSIQSTTSV. The segment covering 1771 to 1805 has biased composition (low complexity); it reads PSSRQSVRSATSSSPSTPPSSSSAPPKSLSSPTKS. A compositionally biased stretch (polar residues) spans 1806–1820; the sequence is YVSHCSLSIGYGSTA. Over residues 1821 to 1832 the composition is skewed to low complexity; the sequence is SSEQQQREPSPS.

The protein belongs to the protein kinase superfamily. Ser/Thr protein kinase family. WNK subfamily. Interacts with gck-3 (via C-terminus). Requires Mg(2+) as cofactor. In terms of tissue distribution, expressed in pharynx, nervous system, hypodermis, spermatheca, excretory cell and canal and body wall muscles.

The protein localises to the cytoplasm. The enzyme catalyses L-seryl-[protein] + ATP = O-phospho-L-seryl-[protein] + ADP + H(+). It catalyses the reaction L-threonyl-[protein] + ATP = O-phospho-L-threonyl-[protein] + ADP + H(+). Its activity is regulated as follows. Activated in response to hyperosmotic stress: cell shrinkage promotes formation of a membraneless compartment that concentrates wnk-1 with its downstrem substrates. In terms of biological role, serine/threonine-protein kinase component of the WNK3-SPAK/OSR1 kinase cascade, which plays an important role in the regulation of electrolyte homeostasis and regulatory volume increase in response to hyperosmotic stress. Wnk-1 mediates regulatory volume increase in response to hyperosmotic stress by acting as a molecular crowding sensor, which senses cell shrinkage and mediates formation of a membraneless compartment by undergoing liquid-liquid phase separation. The membraneless compartment concentrates wnk-1 with its substrates. Phosphorylates gck-3. Plays a role in osmotic stress responses during which it increases gpdh-1 translation, likely by phosphorylating gck-3. Essential for larval development and the tubular formation of the excretory canals. The chain is Serine/threonine-protein kinase WNK from Caenorhabditis elegans.